A 164-amino-acid chain; its full sequence is uncharacterized protein (164 aa).

The next 4 membrane-spanning stretches (helical) occupy residues 25 to 45 (QFGF…PLLG), 63 to 83 (GMAV…VYIV), 120 to 140 (FWTA…ADFF), and 141 to 161 (TVQM…LMMM).

This sequence belongs to the major facilitator superfamily.

It is found in the cell membrane. This is an uncharacterized protein from Bacillus subtilis (strain 168).